A 260-amino-acid polypeptide reads, in one-letter code: DNA repair protein RecO (260 aa).

A disordered region spans residues 239–260 (SAGVAAARKAGGDGSDGDEGEQ).

It belongs to the RecO family.

Involved in DNA repair and RecF pathway recombination. The polypeptide is DNA repair protein RecO (Sodalis glossinidius (strain morsitans)).